A 501-amino-acid chain; its full sequence is Ribose import ATP-binding protein RbsA (501 aa).

ABC transporter domains are found at residues 5 to 241 and 252 to 495; these read LQLK…VGRK and APGD…VGKL. 37–44 serves as a coordination point for ATP; that stretch reads GENGAGKS.

The protein belongs to the ABC transporter superfamily. Ribose importer (TC 3.A.1.2.1) family. The complex is composed of an ATP-binding protein (RbsA), two transmembrane proteins (RbsC) and a solute-binding protein (RbsB).

The protein resides in the cell inner membrane. The enzyme catalyses D-ribose(out) + ATP + H2O = D-ribose(in) + ADP + phosphate + H(+). In terms of biological role, part of the ABC transporter complex RbsABC involved in ribose import. Responsible for energy coupling to the transport system. The sequence is that of Ribose import ATP-binding protein RbsA from Escherichia coli (strain K12).